A 238-amino-acid polypeptide reads, in one-letter code: MKLSLSVALSLAASTAQAATQFCDQWGSVTEGNYILYNNLWGQAQATSGSQCTTFESLSGNTIVWNTKWSWSGGQGQVKSFANAALQFTPKKLSSVKSIDSTWKWNYSGSNIVADVAYDMFLSTSPGGDHNYEIMVWLGALGGAGPISSTGSPIATPTVAGIKFNLYLGPNGSMQVYSFVAQSTTNSFSGDMRDFFTYLESNQGLSSDLYLVDVQAGTEPFSGSNAVFTVSDYSVSVA.

An N-terminal signal peptide occupies residues 1–18 (MKLSLSVALSLAASTAQA). N-linked (GlcNAc...) asparagine glycans are attached at residues Asn-106 and Asn-171.

This sequence belongs to the glycosyl hydrolase 12 (cellulase H) family.

Its subcellular location is the secreted. The enzyme catalyses xyloglucan + H2O = xyloglucan oligosaccharides.. Its function is as follows. Catalyzes endohydrolysis of 1,4-beta-D-glucosidic linkages in xyloglucan with retention of the beta-configuration of the glycosyl residues. Specific for xyloglucan and does not hydrolyze other cell wall components. The polypeptide is Probable xyloglucan-specific endo-beta-1,4-glucanase A (xgeA) (Aspergillus fumigatus (strain ATCC MYA-4609 / CBS 101355 / FGSC A1100 / Af293) (Neosartorya fumigata)).